The following is a 427-amino-acid chain: Histidinol dehydrogenase (427 aa).

NAD(+)-binding residues include tyrosine 127, glutamine 185, and asparagine 208. Serine 232, glutamine 254, and histidine 257 together coordinate substrate. The Zn(2+) site is built by glutamine 254 and histidine 257. Active-site proton acceptor residues include glutamate 321 and histidine 322. Substrate is bound by residues histidine 322, aspartate 355, glutamate 409, and histidine 414. Aspartate 355 is a binding site for Zn(2+). Residue histidine 414 coordinates Zn(2+).

Belongs to the histidinol dehydrogenase family. The cofactor is Zn(2+).

The catalysed reaction is L-histidinol + 2 NAD(+) + H2O = L-histidine + 2 NADH + 3 H(+). It participates in amino-acid biosynthesis; L-histidine biosynthesis; L-histidine from 5-phospho-alpha-D-ribose 1-diphosphate: step 9/9. In terms of biological role, catalyzes the sequential NAD-dependent oxidations of L-histidinol to L-histidinaldehyde and then to L-histidine. This is Histidinol dehydrogenase from Haemophilus influenzae (strain 86-028NP).